Reading from the N-terminus, the 178-residue chain is Anthranilate synthase component 2 (178 aa).

One can recognise a Glutamine amidotransferase type-1 domain in the interval 1–178 (MIVVVDCKDS…RNFVEMCHDG (178 aa)). 49–51 (GPG) provides a ligand contact to L-glutamine. Catalysis depends on cysteine 71, which acts as the Nucleophile; for GATase activity. L-glutamine contacts are provided by residues glutamine 75 and 120–121 (SL). Catalysis depends on for GATase activity residues histidine 155 and glutamate 157.

As to quaternary structure, heterotetramer consisting of two non-identical subunits: a beta subunit (TrpG) and a large alpha subunit (TrpE).

It carries out the reaction chorismate + L-glutamine = anthranilate + pyruvate + L-glutamate + H(+). The protein operates within amino-acid biosynthesis; L-tryptophan biosynthesis; L-tryptophan from chorismate: step 1/5. Functionally, part of a heterotetrameric complex that catalyzes the two-step biosynthesis of anthranilate, an intermediate in the biosynthesis of L-tryptophan. In the first step, the glutamine-binding beta subunit (TrpG) of anthranilate synthase (AS) provides the glutamine amidotransferase activity which generates ammonia as a substrate that, along with chorismate, is used in the second step, catalyzed by the large alpha subunit of AS (TrpE) to produce anthranilate. In the absence of TrpG, TrpE can synthesize anthranilate directly from chorismate and high concentrations of ammonia. The polypeptide is Anthranilate synthase component 2 (trpG) (Archaeoglobus fulgidus (strain ATCC 49558 / DSM 4304 / JCM 9628 / NBRC 100126 / VC-16)).